A 196-amino-acid polypeptide reads, in one-letter code: Probable malonic semialdehyde reductase RutE (196 aa).

This sequence belongs to the nitroreductase family. HadB/RutE subfamily. It depends on FMN as a cofactor.

The catalysed reaction is 3-hydroxypropanoate + NADP(+) = 3-oxopropanoate + NADPH + H(+). May reduce toxic product malonic semialdehyde to 3-hydroxypropionic acid, which is excreted. The polypeptide is Probable malonic semialdehyde reductase RutE (Escherichia coli O81 (strain ED1a)).